The chain runs to 448 residues: Phosphoglucosamine mutase (448 aa).

S101 acts as the Phosphoserine intermediate in catalysis. Residues S101, D242, D244, and D246 each coordinate Mg(2+). Residue S101 is modified to Phosphoserine.

It belongs to the phosphohexose mutase family. Requires Mg(2+) as cofactor. Post-translationally, activated by phosphorylation.

It carries out the reaction alpha-D-glucosamine 1-phosphate = D-glucosamine 6-phosphate. Catalyzes the conversion of glucosamine-6-phosphate to glucosamine-1-phosphate. This Afipia carboxidovorans (strain ATCC 49405 / DSM 1227 / KCTC 32145 / OM5) (Oligotropha carboxidovorans) protein is Phosphoglucosamine mutase.